The sequence spans 558 residues: Tyrosine N-monooxygenase (558 aa).

The chain crosses the membrane as a helical span at residues 13-33 (VLAAPLLSSSAILKLLLFVVT). Residues 48–67 (TTKCSSTTCASPPAGVGNPP) are disordered. Positions 49-65 (TKCSSTTCASPPAGVGN) are enriched in low complexity. The heme b site is built by arginine 138, arginine 167, histidine 422, arginine 491, and cysteine 493.

It belongs to the cytochrome P450 family. Requires heme b as cofactor.

It localises to the endoplasmic reticulum membrane. It catalyses the reaction L-tyrosine + 2 reduced [NADPH--hemoprotein reductase] + 2 O2 = (E)-4-hydroxyphenylacetaldehyde oxime + 2 oxidized [NADPH--hemoprotein reductase] + CO2 + 3 H2O + 2 H(+). The enzyme catalyses L-tyrosine + reduced [NADPH--hemoprotein reductase] + O2 = N-hydroxy-L-tyrosine + oxidized [NADPH--hemoprotein reductase] + H2O + 2 H(+). It carries out the reaction N-hydroxy-L-tyrosine + reduced [NADPH--hemoprotein reductase] + O2 = N,N-dihydroxy-L-tyrosine + oxidized [NADPH--hemoprotein reductase] + H2O + H(+). The catalysed reaction is N,N-dihydroxy-L-tyrosine + H(+) = (E)-4-hydroxyphenylacetaldehyde oxime + CO2 + H2O. It participates in secondary metabolite biosynthesis; dhurrin biosynthesis; dhurrin from L-tyrosine: step 1/3. In terms of biological role, cytochrome P450 involved in the biosynthesis of the cyanogenic glucoside dhurrin. Catalyzes the conversion of L-tyrosine to p-hydroxyphenylacetaldehyde oxime, via the N-hydroxy-L-tyrosine and N,N-dihydroxy-L-tyrosine intermediates. Produces the (E) isomer of the final oxime product. This Sorghum bicolor (Sorghum) protein is Tyrosine N-monooxygenase (CYP79A1).